The primary structure comprises 27 residues: Potassium channel toxin alpha-KTx 9.11 (27 aa).

3 cysteine pairs are disulfide-bonded: Cys3-Cys19, Cys6-Cys23, and Cys10-Cys25.

This sequence belongs to the short scorpion toxin superfamily. Potassium channel inhibitor family. Alpha-KTx 09 subfamily. In terms of tissue distribution, expressed by the venom gland.

It is found in the secreted. Its function is as follows. May play a role in blocking voltage-gated potassium channels Kv1.2/KCNA2, Kv1.3/KCNA3 and Kv1.6/KCNA6 to a lesser extent. This chain is Potassium channel toxin alpha-KTx 9.11, found in Mesobuthus gibbosus (Mediterranean checkered scorpion).